The sequence spans 1551 residues: Dual oxidase 1 (1551 aa).

The signal sequence occupies residues 1–21 (MGFCLALTWTFLVGSWTSMGA). Topologically, residues 22–596 (QKPISWEVQR…YFEGSGFGFG (575 aa)) are extracellular. The interval 26-593 (SWEVQRFDGW…MQDYFEGSGF (568 aa)) is peroxidase-like; mediates peroxidase activity. Residue asparagine 94 is glycosylated (N-linked (GlcNAc...) asparagine). A disordered region spans residues 197 to 222 (LASGPDPAFPRNAQPPLLMWSAPDPA). N-linked (GlcNAc...) asparagine glycosylation is found at asparagine 342, asparagine 354, asparagine 461, and asparagine 534. A helical transmembrane segment spans residues 597–617 (VTIGTLCCFPLVSLLSAWIVA). Residues 618 to 1044 (RLRKKNFKKL…KRFIENYRRH (427 aa)) are Cytoplasmic-facing. 3 EF-hand domains span residues 815–850 (PQDM…FMKG), 851–886 (SPEE…FIEI), and 895–930 (QLTE…HDSE). Ca(2+)-binding residues include aspartate 828, aspartate 830, asparagine 832, tyrosine 834, glutamate 839, aspartate 864, aspartate 866, asparagine 868, and glutamate 875. The segment at 956 to 1248 (YISQEKICPS…GSFGLIQLPR (293 aa)) is interaction with TXNDC11. The chain crosses the membrane as a helical span at residues 1045-1065 (IGCVAVFYAITGGLFLERAYY). Over 1066–1080 (YAFGAHHMGITDTTR) the chain is Extracellular. Residues 1081–1101 (VGIILSRGTAASISFMFSYIL) traverse the membrane as a helical segment. Positions 1087–1269 (RGTAASISFM…YVGDKLVSLS (183 aa)) constitute a Ferric oxidoreductase domain. Residues 1102 to 1151 (LTMCRNLITFLRETFLNRYVPFDAAVDFHRLIASTAIVLTVLHSAGHVVN) lie on the Cytoplasmic side of the membrane. Residues 1152 to 1172 (VYLFSISPLSVLSCLFPGLFH) traverse the membrane as a helical segment. The Extracellular segment spans residues 1173-1188 (NDGSEFPQKYYWWFFQ). The helical transmembrane segment at 1189–1209 (TVPGLTGVMLLLVLAIMYVFA) threads the bilayer. The Cytoplasmic portion of the chain corresponds to 1210–1226 (SHHFRRHSFRGFWLTHH). A helical membrane pass occupies residues 1227-1247 (LYILLYVLLIIHGSFGLIQLP). A topological domain (extracellular) is located at residue arginine 1248. The helical transmembrane segment at 1249-1269 (FHIFFLVPALIYVGDKLVSLS) threads the bilayer. The region spanning 1270–1376 (RKKVEISVVK…DGPFGEGHQE (107 aa)) is the FAD-binding FR-type domain. Topologically, residues 1270-1551 (RKKVEISVVK…THFSHHYENF (282 aa)) are cytoplasmic.

It in the N-terminal section; belongs to the peroxidase family. As to quaternary structure, interacts with TPO and CYBA. Interacts with TXNDC11. Post-translationally, N-glycosylated. In terms of tissue distribution, expressed in thyrocytes (at protein level). Specifically expressed in thyroid.

It is found in the apical cell membrane. It carries out the reaction NADH + O2 + H(+) = H2O2 + NAD(+). It catalyses the reaction NADPH + O2 + H(+) = H2O2 + NADP(+). The protein operates within hormone biosynthesis; thyroid hormone biosynthesis. Peroxidase activity is inhibited by aminobenzohydrazide. The NADPH oxidase activity is calcium-dependent. Its function is as follows. Generates hydrogen peroxide which is required for the activity of thyroid peroxidase/TPO and lactoperoxidase/LPO. Plays a role in thyroid hormones synthesis and lactoperoxidase-mediated antimicrobial defense at the surface of mucosa. May have its own peroxidase activity through its N-terminal peroxidase-like domain. The chain is Dual oxidase 1 (DUOX1) from Canis lupus familiaris (Dog).